Here is a 349-residue protein sequence, read N- to C-terminus: Protein-arginine kinase (349 aa).

Residues 24 to 252 (IVLSSRIRLA…SQIIEQERQA (229 aa)) enclose the Phosphagen kinase C-terminal domain. Residues 27-31 (SSRIR), His89, Arg123, 174-178 (RASVM), and 205-210 (RGIYGE) contribute to the ATP site. Positions 335–340 (RDIKRA) match the RDXXRA motif of the pArg binding pocket involved in allosteric regulation motif.

Belongs to the ATP:guanido phosphotransferase family.

It catalyses the reaction L-arginyl-[protein] + ATP = N(omega)-phospho-L-arginyl-[protein] + ADP + H(+). Appears to be allosterically activated by the binding of pArg-containing polypeptides to the pArg-binding pocket localized in the C-terminal domain of McsB. Functionally, catalyzes the specific phosphorylation of arginine residues in proteins. This Halothermothrix orenii (strain H 168 / OCM 544 / DSM 9562) protein is Protein-arginine kinase.